A 307-amino-acid chain; its full sequence is Yop proteins translocation protein Q (307 aa).

Belongs to the FliN/MopA/SpaO family.

In terms of biological role, component of the Yop secretion machinery. The protein is Yop proteins translocation protein Q (yscQ) of Yersinia pestis.